The following is a 547-amino-acid chain: Oncoprotein-induced transcript 3 protein (547 aa).

Positions 1 to 19 (MPQLLLLACLLIIVTRVAP) are cleaved as a signal peptide. N-linked (GlcNAc...) asparagine glycans are attached at residues Asn-89 and Asn-116. Residues 182 to 222 (DENECEQNNGGCSEICVNLKNSYRCECGIGRVLRSDGKTCE) enclose the EGF-like; calcium-binding domain. 3 cysteine pairs are disulfide-bonded: Cys-186–Cys-197, Cys-193–Cys-206, and Cys-208–Cys-221. Positions 267–516 (FCKSNTIEVS…SRCAQGCHRR (250 aa)) constitute a ZP domain. Asn-299 carries an N-linked (GlcNAc...) asparagine glycan. The interval 520 to 547 (EASTEGEDASGPRSQMLTGGPISIDWED) is disordered.

It is found in the nucleus envelope. May be involved in hepatocellular function and development. The polypeptide is Oncoprotein-induced transcript 3 protein (OIT3) (Bos taurus (Bovine)).